A 127-amino-acid chain; its full sequence is uncharacterized protein (127 aa).

Residues 1-16 (MIKKIIFGIAILLSTS) form the signal peptide. Residue cysteine 17 is the site of N-palmitoyl cysteine attachment. Cysteine 17 carries S-diacylglycerol cysteine lipidation. Residues 56-101 (EVREEIQKYRVAIVKINKKKRELYNRLSKEAQNFLAEQQKYKQKLS) are a coiled coil. Over residues 107 to 118 (VENDQKNNTADS) the composition is skewed to polar residues. The tract at residues 107–127 (VENDQKNNTADSNDNKSKDTK) is disordered.

The protein localises to the cell membrane. This is an uncharacterized protein from Rickettsia conorii (strain ATCC VR-613 / Malish 7).